A 136-amino-acid chain; its full sequence is MARTKQTARKSTGGKAPRKQLVTKAAKKCAPATGGVKKPHRYRPGTVALREIRRYQKSTELLIRKLPFQRLVREIAQDFKTDLRFQRSAVMALQEASEAYLVALFEDTNLCAIHAKRVTIMPKDIQLARRIRGERA.

The segment at 1 to 42 is disordered; the sequence is MARTKQTARKSTGGKAPRKQLVTKAAKKCAPATGGVKKPHRY. At Arg-3 the chain carries Asymmetric dimethylarginine; by PRMT6. Position 4 is a phosphothreonine; by HASPIN (Thr-4). Allysine; alternate is present on Lys-5. Lys-5 bears the N6,N6,N6-trimethyllysine; alternate mark. Residue Lys-5 is modified to N6,N6-dimethyllysine; alternate. Lys-5 is subject to N6-(2-hydroxyisobutyryl)lysine; alternate. At Lys-5 the chain carries N6-acetyllysine; alternate. Residue Lys-5 is modified to N6-methyllysine; alternate. Gln-6 is modified (5-glutamyl dopamine; alternate). The residue at position 6 (Gln-6) is a 5-glutamyl serotonin; alternate. At Thr-7 the chain carries Phosphothreonine; by PKC. Lys-10 carries the post-translational modification N6-(2-hydroxyisobutyryl)lysine; alternate. At Lys-10 the chain carries N6-lactoyllysine; alternate. N6-methylated lysine is present on Lys-10. Ser-11 carries the ADP-ribosylserine; alternate modification. Ser-11 is modified (phosphoserine; alternate; by AURKB, AURKC, RPS6KA3, RPS6KA4 and RPS6KA5). Thr-12 is subject to Phosphothreonine; by PKC. Lys-15 carries the post-translational modification N6-(2-hydroxyisobutyryl)lysine; alternate. N6-lactoyllysine; alternate is present on Lys-15. Lys-15 carries the post-translational modification N6-acetyllysine. The residue at position 15 (Lys-15) is an N6-glutaryllysine; alternate. Arg-18 carries the post-translational modification Asymmetric dimethylarginine. Lys-19, Lys-24, Lys-28, and Lys-37 each carry N6-(2-hydroxyisobutyryl)lysine; alternate. N6-acetyllysine; alternate is present on Lys-19. Residues Lys-19, Lys-24, and Lys-28 each carry the N6-lactoyllysine; alternate modification. Residues Lys-19, Lys-24, and Lys-28 each carry the N6-glutaryllysine; alternate modification. Residues Lys-19 and Lys-24 each carry the N6-butyryllysine; alternate modification. At Lys-19 the chain carries N6-methylated lysine; alternate. At Lys-24 the chain carries N6-acetyllysine. 2 positions are modified to N6-acetyllysine; alternate: Lys-28 and Lys-37. An N6-methylated lysine; alternate mark is found at Lys-28 and Lys-37. Tyr-42 is subject to Phosphotyrosine. N6-(2-hydroxyisobutyryl)lysine; alternate is present on Lys-57. Lys-57 carries the N6-lactoyllysine; alternate modification. Lys-57 carries the post-translational modification N6-glutaryllysine; alternate. Residue Lys-57 is modified to N6-succinyllysine; alternate. Ser-58 is modified (phosphoserine). An N6-(2-hydroxyisobutyryl)lysine; alternate mark is found at Lys-65 and Lys-80. N6-methylated lysine occurs at positions 65 and 80. Lys-80 carries the post-translational modification N6-lactoyllysine; alternate. Lys-80 is modified (N6-glutaryllysine; alternate). An N6-succinyllysine; alternate modification is found at Lys-80. Residue Thr-81 is modified to Phosphothreonine. Lys-116 and Lys-123 each carry N6-acetyllysine; alternate. Lys-116 and Lys-123 each carry N6-glutaryllysine; alternate. Position 123 is an N6-(2-hydroxyisobutyryl)lysine; alternate (Lys-123). An N6-methylated lysine; alternate modification is found at Lys-123. Lys-123 is subject to N6-succinyllysine; alternate.

It belongs to the histone H3 family. In terms of assembly, the nucleosome is a histone octamer containing two molecules each of H2A, H2B, H3 and H4 assembled in one H3-H4 heterotetramer and two H2A-H2B heterodimers. The octamer wraps approximately 147 bp of DNA. In terms of processing, acetylation is generally linked to gene activation. Acetylation on Lys-19 (H3K18ac) and Lys-24 (H3K24ac) favors methylation at Arg-18 (H3R17me). Acetylation at Lys-123 (H3K122ac) by EP300/p300 plays a central role in chromatin structure: localizes at the surface of the histone octamer and stimulates transcription, possibly by promoting nucleosome instability. Asymmetric dimethylation at Arg-18 (H3R17me2a) is linked to gene activation. Asymmetric dimethylation at Arg-3 (H3R2me2a) by PRMT6 is linked to gene repression and is mutually exclusive with H3 Lys-5 methylation (H3K4me2 and H3K4me3). H3R2me2a is present at the 3' of genes regardless of their transcription state and is enriched on inactive promoters, while it is absent on active promoters. Post-translationally, methylation at Lys-5 (H3K4me) and Lys-80 (H3K79me) are linked to gene activation. Methylation at Lys-5 (H3K4me) facilitates subsequent acetylation of H3 and H4. Methylation at Lys-80 (H3K79me) is associated with DNA double-strand break (DSB) responses and is a specific target for TP53BP1. Methylation at Lys-10 (H3K9me) and Lys-28 (H3K27me) are linked to gene repression. Methylation at Lys-10 (H3K9me) is a specific target for HP1 proteins (CBX1, CBX3 and CBX5) and prevents subsequent phosphorylation at Ser-11 (H3S10ph) and acetylation of H3 and H4. Methylation at Lys-5 (H3K4me) and Lys-80 (H3K79me) require preliminary monoubiquitination of H2B at 'Lys-120'. In terms of processing, phosphorylated at Thr-4 (H3T3ph) by HASPIN during prophase and dephosphorylated during anaphase. Phosphorylation at Ser-11 (H3S10ph) by aurkb is crucial for chromosome condensation and cell-cycle progression during mitosis and meiosis. In addition phosphorylation at Ser-11 (H3S10ph) by rps6ka4 and rps6ka5 is important during interphase because it enables the transcription of genes following external stimulation, like mitogens, stress, growth factors or UV irradiation and result in the activation of genes, such as c-fos and c-jun. Phosphorylation at Ser-11 (H3S10ph), which is linked to gene activation, prevents methylation at Lys-10 (H3K9me) but facilitates acetylation of H3 and H4. Phosphorylation at Ser-11 (H3S10ph) by aurkb mediates the dissociation of HP1 proteins (cbx1, cbx3 and cbx5) from heterochromatin. Phosphorylation at Ser-11 (H3S10ph) is also an essential regulatory mechanism for neoplastic cell transformation. Phosphorylation at Thr-7 (H3T6ph) by prkcb is a specific tag for epigenetic transcriptional activation that prevents demethylation of Lys-5 (H3K4me) by lsd1/kdm1a. At centromeres, specifically phosphorylated at Thr-12 (H3T11ph) from prophase to early anaphase, by DAPK3 and PKN1. Phosphorylation at Thr-12 (H3T11ph) by PKN1 or isoform M2 of PKM (PKM2) is a specific tag for epigenetic transcriptional activation that promotes demethylation of Lys-10 (H3K9me) by kdm4c/jmjd2c. Phosphorylation at Tyr-42 (H3Y41ph) by jak2 promotes exclusion of cbx5 (HP1 alpha) from chromatin. Lysine deamination at Lys-5 (H3K4all) to form allysine only takes place on H3K4me3 and results in gene repression. Post-translationally, butyrylation of histones marks active promoters and competes with histone acetylation. It is present during late spermatogenesis. In terms of processing, succinylation at Lys-80 (H3K79succ) by KAT2A takes place with a maximum frequency around the transcription start sites of genes. It gives a specific tag for epigenetic transcription activation. Desuccinylation at Lys-123 (H3K122succ) by SIRT7 in response to DNA damage promotes chromatin condensation and double-strand breaks (DSBs) repair. Serine ADP-ribosylation constitutes the primary form of ADP-ribosylation of proteins in response to DNA damage. Serine ADP-ribosylation at Ser-11 (H3S10ADPr) is mutually exclusive with phosphorylation at Ser-11 (H3S10ph) and impairs acetylation at Lys-10 (H3K9ac).

The protein resides in the nucleus. It is found in the chromosome. In terms of biological role, core component of nucleosome. Nucleosomes wrap and compact DNA into chromatin, limiting DNA accessibility to the cellular machineries which require DNA as a template. Histones thereby play a central role in transcription regulation, DNA repair, DNA replication and chromosomal stability. DNA accessibility is regulated via a complex set of post-translational modifications of histones, also called histone code, and nucleosome remodeling. This chain is Histone H3.3C (h3-5), found in Xenopus laevis (African clawed frog).